We begin with the raw amino-acid sequence, 200 residues long: Probable GTP-binding protein EngB (200 aa).

The EngB-type G domain maps to 22–197 (NLPEYAFIGR…LDYIDSINRS (176 aa)). GTP contacts are provided by residues 30–37 (GRSNVGKS), 57–61 (GKTLL), 75–78 (DLPG), 142–145 (TKAD), and 173–178 (HFVSSS). Residues serine 37 and threonine 59 each contribute to the Mg(2+) site.

The protein belongs to the TRAFAC class TrmE-Era-EngA-EngB-Septin-like GTPase superfamily. EngB GTPase family. The cofactor is Mg(2+).

Functionally, necessary for normal cell division and for the maintenance of normal septation. The chain is Probable GTP-binding protein EngB from Phocaeicola vulgatus (strain ATCC 8482 / DSM 1447 / JCM 5826 / CCUG 4940 / NBRC 14291 / NCTC 11154) (Bacteroides vulgatus).